The following is a 1198-amino-acid chain: MSAEASPETGRFRTKSSPELFFPATDSEGEEQNDVPLTIVHPTQSTSSKFSINIASSSRPQHGITTGDFEATSQTSAHDNVDDDFSIVGHNPASSHPQGTIVAPRRKRSLQQAHSHHSSSSSSPVPSAPVIRADFRKGFLGEFVCEGWSLSKGRGYCSPGTKIVIERPKSKSTDVGAPKPGRKDSGPVRLVNGKVVGGVKSKQMTLGSMMAKKVEPAKKVKATTDQIIRFRNERGFEIGRLSIHEAGFLAHLLDTGVIQLSGNVIDCPQNLTTGCTILLNIKVYLARKAFENFGKHKREEHFSFWKDQRETAMEEAMRLRKDSLRSLFERIGVKPIQSSALSKVTPIQGVLNRQKGPDLEGSRLRSSPSTSTAEEKGKGRAAMPAVDDDGEDSGDEAEKLDEKQMNEIDSIYRKAQQGDTRLDEMDPPSTFLYTLRPYQKQALTWMNAREKGDSSVRNESLHPLWEEYLFKKDQLPGEPIEISDDDEQPDSTRKFYWNPYSGELSLKFPTSQNLSRGGILADAMGMGKTCMMASLIHTNREEKPAGNLESQTRDGVEGEIDEEPASKRIKFKQVTLSNQWRAVPTAPKVESFPRATLVVCPVSLAAQWHDELRKMSQQGSINSYVWYGGDRVDIEALLAGDGKERVDVIVTSYGTLTSEYQKWLRTKDRPNYEGGSLYDHEFLRIVLDEAHNIRNRLAMVSKACYELKGQRRWALTGTPIVNRLEDLYSLLHFLRITPWGNYSFFRSFVTVPFLNQDHKALNVVQYILESCLLRREKTMRDKDGRLIVDLPPKTVEIKVLQFSRAERQIYKFLEERAKKRFIDLDADGRAMSNYTSILAMLMKLRQCVDHPLLVLGKSGEDGELGEKILESGAGNGEGNLRDMIAMYAGGIRAETPEDVDKAYAAKVLKELGEQEDTPICELCSNEMFDEVLLPCYHRSCQDCIVEWIGTCEDQNKIASCPSCGKGPIKLADLRSVQRRHKRVNPITDAYPGGRDPNLKSSNDTTVTLGKVDLVTSTKLRALLRQLEEIRQEDPKAKALVFSQFTSFLDLIEATLTKQGIRWLRFDGTMSQAQRANTIEEFGRKTNEPLILLISLKAGGVGLNLTMANYVFLMDTWWNEAIEQQAIDRVHRLGQNKPVYVTRYIIKGTVEKRIMKIQRSKTALVNASLSNGAKTKETTLADIKKIFGMDEEDSEGEVY.

Disordered regions lie at residues 1 to 129 (MSAE…PSAP) and 348 to 401 (QGVL…EKLD). Low complexity predominate over residues 45–58 (STSSKFSINIASSS). Over residues 104–117 (PRRKRSLQQAHSHH) the composition is skewed to basic residues. The segment covering 118–129 (SSSSSSPVPSAP) has biased composition (low complexity). Residues 386-395 (VDDDGEDSGD) are compositionally biased toward acidic residues. Positions 509-737 (PTSQNLSRGG…YSLLHFLRIT (229 aa)) constitute a Helicase ATP-binding domain. 522–529 (DAMGMGKT) is an ATP binding site. The disordered stretch occupies residues 541–564 (EEKPAGNLESQTRDGVEGEIDEEP). The DEAH box motif lies at 688-691 (DEAH). The RING-type zinc finger occupies 920 to 964 (CELCSNEMFDEVLLPCYHRSCQDCIVEWIGTCEDQNKIASCPSCG). Residues 1021 to 1180 (ALLRQLEEIR…GAKTKETTLA (160 aa)) enclose the Helicase C-terminal domain.

This sequence belongs to the SNF2/RAD54 helicase family.

It is found in the cytoplasm. It localises to the nucleus. In terms of biological role, probable helicase, member of the UBC2/RAD6 epistasis group. Functions with DNA repair protein RAD18 in error-free postreplication DNA repair. Involved in the maintenance of wild-type rates of instability of simple repetitive sequences such as poly(GT) repeats. Seems to be involved in maintaining a balance which acts in favor of error-prone non-homologous joining during DNA double-strand breaks repairs. This Cryptococcus neoformans var. neoformans serotype D (strain JEC21 / ATCC MYA-565) (Filobasidiella neoformans) protein is DNA repair protein RAD5 (RAD5).